Reading from the N-terminus, the 363-residue chain is MRLYPAFFKAAFSWMDPELAHTLGFAGIKLAHRTGLGRVLSRVTAPDEGAEVNVMGLTFPSPFGLAAGFDKGATGTHALTQLGFGHVEIGTVTGQAQPGNPRPRLFRLVRDRAVINRMGFNNDGAEAVAPRVAAALQTLAQESIRTGRRRPVVGVNIGKTKAVGLEDAAADYVRSTRVLAPYADYLVVNVSSPNTPGLRQLQELDALRPLLLAVRAEADRVTGRRVPLLVKIAPDLADEDVTAVADLALELGLDGIVATNTTIAREGLGLRTNHDDVAACGAGGLSGAPLRRRSLEVLRLLKEHAGEQLVLVSVGGVTTARDVMERLDAGASLVQGYTAFLYEGPFWAGRINRGLRRAAREGR.

Residues 67–71 (AGFDK) and Thr-91 contribute to the FMN site. Residue Lys-71 coordinates substrate. 116 to 120 (NRMGF) is a substrate binding site. FMN-binding residues include Asn-156 and Asn-189. Asn-189 lines the substrate pocket. Ser-192 functions as the Nucleophile in the catalytic mechanism. Asn-194 contacts substrate. FMN is bound by residues Lys-231 and Thr-259. A substrate-binding site is contributed by 260-261 (NT). Residues Gly-287, Gly-316, and 337-338 (YT) each bind FMN.

This sequence belongs to the dihydroorotate dehydrogenase family. Type 2 subfamily. As to quaternary structure, monomer. FMN serves as cofactor.

Its subcellular location is the cell membrane. It carries out the reaction (S)-dihydroorotate + a quinone = orotate + a quinol. The protein operates within pyrimidine metabolism; UMP biosynthesis via de novo pathway; orotate from (S)-dihydroorotate (quinone route): step 1/1. In terms of biological role, catalyzes the conversion of dihydroorotate to orotate with quinone as electron acceptor. The sequence is that of Dihydroorotate dehydrogenase (quinone) from Kocuria rhizophila (strain ATCC 9341 / DSM 348 / NBRC 103217 / DC2201).